The chain runs to 735 residues: Ribosomal RNA large subunit methyltransferase K/L (735 aa).

The 112-residue stretch at 45 to 156 (DGYRACLWSR…RDSLSFSLDL (112 aa)) folds into the THUMP domain.

Belongs to the methyltransferase superfamily. RlmKL family.

Its subcellular location is the cytoplasm. It carries out the reaction guanosine(2445) in 23S rRNA + S-adenosyl-L-methionine = N(2)-methylguanosine(2445) in 23S rRNA + S-adenosyl-L-homocysteine + H(+). It catalyses the reaction guanosine(2069) in 23S rRNA + S-adenosyl-L-methionine = N(2)-methylguanosine(2069) in 23S rRNA + S-adenosyl-L-homocysteine + H(+). Specifically methylates the guanine in position 2445 (m2G2445) and the guanine in position 2069 (m7G2069) of 23S rRNA. This Allochromatium vinosum (strain ATCC 17899 / DSM 180 / NBRC 103801 / NCIMB 10441 / D) (Chromatium vinosum) protein is Ribosomal RNA large subunit methyltransferase K/L.